The chain runs to 457 residues: MGSDRWKNIGGTPQMEDSAQEKTQRKGCGYILCTVLLSVAVLLAVTVTGAVLFMNHYHAPSTEPPPVITTNMEDPNALVTIERADSSHINIFIDPNCPDPFPRLDGLQSALLSALADHDSEQKVAGGKERVLLTSLSDQVAQMVSQVARQRADWEIVKKVQNGLGAEIGALKNEQGRLIKLLSEGQSHVVQLGSSVSEVLETVQRELGSGRPRLKADLQRAPSRNSRPRGCANGSKPRDCYDIYMSGQQEDGVYSVFPIHYPSGFQVFCDMTTDGGGWTVFQRREDGSVNFFQGWEQYRDGFGKLTGEHWLGLQRIHLLTMQTHYQLRIDLEDFENATAYALYNTFGVGLFSVNPEEDGYPITVSDYTGTAGDSLGKHSGMKFTTKDMDNDHSENNCASFYHGAWWYRNCHTSNLNGQYLTGHHASYADGIEWSSWTGWQYSLKFTEMKIRPQREEN.

The interval 1–20 (MGSDRWKNIGGTPQMEDSAQ) is disordered. The Cytoplasmic portion of the chain corresponds to 1-33 (MGSDRWKNIGGTPQMEDSAQEKTQRKGCGYILC). The chain crosses the membrane as a helical; Signal-anchor for type II membrane protein span at residues 34-54 (TVLLSVAVLLAVTVTGAVLFM). Over 55-457 (NHYHAPSTEP…MKIRPQREEN (403 aa)) the chain is Extracellular. Residues 216–235 (ADLQRAPSRNSRPRGCANGS) form a disordered region. In terms of domain architecture, Fibrinogen C-terminal spans 231-454 (CANGSKPRDC…FTEMKIRPQR (224 aa)). N-linked (GlcNAc...) asparagine glycosylation occurs at Asn-233. A disulfide bond links Cys-240 and Cys-269. A glycan (N-linked (GlcNAc...) asparagine) is linked at Asn-336. 2 residues coordinate Ca(2+): Asp-389 and Asp-391. Cys-397 and Cys-410 are oxidised to a cystine.

In terms of assembly, homotetramer; disulfide-linked.

The protein resides in the membrane. Its function is as follows. Acetyl group-binding receptor which shows a calcium-dependent binding to acetylated structures such as chitin, some N-acetylated carbohydrates, and amino acids. This is Fibrinogen C domain-containing protein 1-A (fibcd1-a) from Xenopus laevis (African clawed frog).